The chain runs to 305 residues: Lysosomal thioesterase PPT2 (305 aa).

An N-terminal signal peptide occupies residues Met-1–Pro-32. Cystine bridges form between Cys-112/Cys-120 and Cys-168/Cys-179. Residue Ser-114 is the Nucleophile of the active site. A glycan (N-linked (GlcNAc...) asparagine) is linked at Asn-193. Catalysis depends on residues Asp-231 and His-286. Cys-279 and Cys-299 are oxidised to a cystine.

The protein belongs to the palmitoyl-protein thioesterase family.

It localises to the lysosome. The catalysed reaction is hexadecanoyl-CoA + H2O = hexadecanoate + CoA + H(+). The enzyme catalyses S-hexadecanoyl-N-acetylcysteamine + H2O = N-acetylcysteamine + hexadecanoate + H(+). Catalyzes the cleavage of thioester bonds from S-palmitoyl-CoA or S-palmitoyl-N-acetylcysteamine (unbranched structures) but does not have activity against palmitoylcysteine or palmitoylated proteins, branched structures or bulky head groups. Conversely, hydrolyzes both long and short chain fatty acyl-CoA substrate. This is Lysosomal thioesterase PPT2 (PPT2) from Bos taurus (Bovine).